A 516-amino-acid chain; its full sequence is Threonine synthase 2, chloroplastic (516 aa).

The transit peptide at 1 to 33 (MASFSLPHSATYFPSHSETSLKPHSAASFTVRC) directs the protein to the chloroplast. Residues 1–37 (MASFSLPHSATYFPSHSETSLKPHSAASFTVRCTSAS) show a composition bias toward polar residues. Residues 1 to 55 (MASFSLPHSATYFPSHSETSLKPHSAASFTVRCTSASPAVPPQTPQKPRRSPDEN) form a disordered region. Residues 133–135 (PYG), 156–158 (SAF), asparagine 163, leucine 164, lysine 172, and asparagine 178 contribute to the S-adenosyl-L-methionine site. The residue at position 194 (lysine 194) is an N6-(pyridoxal phosphate)lysine. Pyridoxal 5'-phosphate-binding positions include 326–330 (GNLGN) and threonine 464.

It belongs to the threonine synthase family. In terms of assembly, homodimer. The cofactor is pyridoxal 5'-phosphate.

The protein localises to the plastid. It is found in the chloroplast. It carries out the reaction O-phospho-L-homoserine + H2O = L-threonine + phosphate. It functions in the pathway amino-acid biosynthesis; L-threonine biosynthesis; L-threonine from L-aspartate: step 5/5. Its activity is regulated as follows. Allosterically activated by S-adenosyl-methionine (SAM). In terms of biological role, catalyzes the gamma-elimination of phosphate from L-phosphohomoserine and the beta-addition of water to produce L-threonine. The polypeptide is Threonine synthase 2, chloroplastic (TS2) (Arabidopsis thaliana (Mouse-ear cress)).